The following is a 112-amino-acid chain: Gastrula zinc finger protein XlCGF9.1 (112 aa).

C2H2-type zinc fingers lie at residues 6-28 (FICS…MKIH), 34-56 (FCCP…ERTH), 62-84 (FTCP…RIIH), and 90-112 (YSCP…FKIH).

This sequence belongs to the krueppel C2H2-type zinc-finger protein family.

It is found in the nucleus. May be involved in transcriptional regulation. In Xenopus laevis (African clawed frog), this protein is Gastrula zinc finger protein XlCGF9.1.